Consider the following 392-residue polypeptide: Zinc transporter zipt-7.1 (392 aa).

N-linked (GlcNAc...) asparagine glycosylation is present at Asn63. Transmembrane regions (helical) follow at residues 82–102 (VFSL…LFFI) and 114–134 (ILLA…IIPH). Residues 139 to 162 (HSHGAHDHDHAHSHDHAHNDHSHD) are disordered. Positions 142–162 (GAHDHDHAHSHDHAHNDHSHD) are enriched in basic and acidic residues. The helical transmembrane segment at 170 to 190 (GIYVIAGILVFMMVEQLVRII) threads the bilayer. A glycan (N-linked (GlcNAc...) asparagine) is linked at Asn248. The next 3 helical transmembrane spans lie at 255–275 (IGAS…TVLL), 304–324 (VTAL…NPVL), and 331–351 (GAIM…SVIP). Asn361 carries N-linked (GlcNAc...) asparagine glycosylation. The helical transmembrane segment at 371 to 391 (SLVHLIAICMGVGMMYIVSLV) threads the bilayer.

Belongs to the ZIP transporter (TC 2.A.5) family. KE4/Catsup subfamily.

The protein localises to the membrane. Its function is as follows. Zinc transporter which regulates intracellular zinc levels. Required for spermatogenesis in both hermaphrodites and males where it resides in an inactive form in immature sperm, spermatids, but is likely activated in response to reduced spe-4 and spe-6 function. Upon activation, mediates the release of zinc from internal stores in spermatids into the cytoplasm. The resulting increase in cytoplasmic zinc levels promotes spermatid activation and subsequent differentiation into mature motile sperm that are capable of fertilization. This chain is Zinc transporter zipt-7.1, found in Caenorhabditis briggsae.